A 439-amino-acid polypeptide reads, in one-letter code: Hydroxyornithine transacylase SID3 (439 aa).

A PTS1-type peroxisomal targeting signal motif is present at residues 437–439 (SKL).

It belongs to the lysine N-acyltransferase mbtK family.

It localises to the peroxisome. It participates in siderophore biosynthesis. Functionally, hydroxyornithine transacylase; part of the gene cluster that mediates the biosynthesis of hydroxamate-containing siderophores that play a critical role in virulence via intracellular iron acquisition during macrophage infection. In Ajellomyces capsulatus (Darling's disease fungus), this protein is Hydroxyornithine transacylase SID3.